The sequence spans 307 residues: Aspartate carbamoyltransferase catalytic subunit (307 aa).

Residues Arg59 and Thr60 each contribute to the carbamoyl phosphate site. Lys87 lines the L-aspartate pocket. 3 residues coordinate carbamoyl phosphate: Arg109, His137, and Gln140. L-aspartate-binding residues include Arg170 and Arg224. 2 residues coordinate carbamoyl phosphate: Gly265 and Pro266.

Belongs to the aspartate/ornithine carbamoyltransferase superfamily. ATCase family. In terms of assembly, heterododecamer (2C3:3R2) of six catalytic PyrB chains organized as two trimers (C3), and six regulatory PyrI chains organized as three dimers (R2).

It catalyses the reaction carbamoyl phosphate + L-aspartate = N-carbamoyl-L-aspartate + phosphate + H(+). Its pathway is pyrimidine metabolism; UMP biosynthesis via de novo pathway; (S)-dihydroorotate from bicarbonate: step 2/3. In terms of biological role, catalyzes the condensation of carbamoyl phosphate and aspartate to form carbamoyl aspartate and inorganic phosphate, the committed step in the de novo pyrimidine nucleotide biosynthesis pathway. In Cytophaga hutchinsonii (strain ATCC 33406 / DSM 1761 / CIP 103989 / NBRC 15051 / NCIMB 9469 / D465), this protein is Aspartate carbamoyltransferase catalytic subunit.